A 190-amino-acid polypeptide reads, in one-letter code: Large ribosomal subunit protein bL25 (190 aa).

This sequence belongs to the bacterial ribosomal protein bL25 family. CTC subfamily. In terms of assembly, part of the 50S ribosomal subunit; part of the 5S rRNA/L5/L18/L25 subcomplex. Contacts the 5S rRNA. Binds to the 5S rRNA independently of L5 and L18.

This is one of the proteins that binds to the 5S RNA in the ribosome where it forms part of the central protuberance. The chain is Large ribosomal subunit protein bL25 from Neisseria meningitidis serogroup A / serotype 4A (strain DSM 15465 / Z2491).